The primary structure comprises 367 residues: tRNA-specific 2-thiouridylase MnmA (367 aa).

ATP is bound by residues 24-31 and Leu50; that span reads AMSGGVDS. Cys115 acts as the Nucleophile in catalysis. Cys115 and Cys211 are disulfide-bonded. Residue Gly139 coordinates ATP. Positions 161–163 are interaction with tRNA; it reads KDQ. Cys211 serves as the catalytic Cysteine persulfide intermediate.

This sequence belongs to the MnmA/TRMU family.

Its subcellular location is the cytoplasm. The enzyme catalyses S-sulfanyl-L-cysteinyl-[protein] + uridine(34) in tRNA + AH2 + ATP = 2-thiouridine(34) in tRNA + L-cysteinyl-[protein] + A + AMP + diphosphate + H(+). Its function is as follows. Catalyzes the 2-thiolation of uridine at the wobble position (U34) of tRNA, leading to the formation of s(2)U34. The polypeptide is tRNA-specific 2-thiouridylase MnmA (Ehrlichia canis (strain Jake)).